Here is a 261-residue protein sequence, read N- to C-terminus: 3-methyl-2-oxobutanoate hydroxymethyltransferase (261 aa).

Residues Asp-47 and Asp-86 each contribute to the Mg(2+) site. Residues 47–48 (DS), Asp-86, and Lys-116 contribute to the 3-methyl-2-oxobutanoate site. Glu-118 is a Mg(2+) binding site. Catalysis depends on Glu-186, which acts as the Proton acceptor.

It belongs to the PanB family. As to quaternary structure, homodecamer; pentamer of dimers. Requires Mg(2+) as cofactor.

It is found in the cytoplasm. The catalysed reaction is 3-methyl-2-oxobutanoate + (6R)-5,10-methylene-5,6,7,8-tetrahydrofolate + H2O = 2-dehydropantoate + (6S)-5,6,7,8-tetrahydrofolate. Its pathway is cofactor biosynthesis; (R)-pantothenate biosynthesis; (R)-pantoate from 3-methyl-2-oxobutanoate: step 1/2. Catalyzes the reversible reaction in which hydroxymethyl group from 5,10-methylenetetrahydrofolate is transferred onto alpha-ketoisovalerate to form ketopantoate. This Thermosynechococcus vestitus (strain NIES-2133 / IAM M-273 / BP-1) protein is 3-methyl-2-oxobutanoate hydroxymethyltransferase.